The chain runs to 83 residues: Small ribosomal subunit protein bS20 (83 aa).

A compositionally biased stretch (basic residues) spans 1–11 (MANHKSAAKRA). The segment at 1-44 (MANHKSAAKRAKQSEARRLRNKSTRSSMNTAVKKVRTAKEAGTD) is disordered.

It belongs to the bacterial ribosomal protein bS20 family.

Functionally, binds directly to 16S ribosomal RNA. The polypeptide is Small ribosomal subunit protein bS20 (Desulforapulum autotrophicum (strain ATCC 43914 / DSM 3382 / VKM B-1955 / HRM2) (Desulfobacterium autotrophicum)).